A 207-amino-acid polypeptide reads, in one-letter code: Small ribosomal subunit protein uS4 (207 aa).

The disordered stretch occupies residues 26 to 47; that stretch reads AINNKNYKPGQQGNSSSISKPS. Residues 28 to 39 show a composition bias toward polar residues; the sequence is NNKNYKPGQQGN. In terms of domain architecture, S4 RNA-binding spans 95–158; the sequence is RRLDAVVYRL…KQIPIVIGAI (64 aa).

The protein belongs to the universal ribosomal protein uS4 family. Part of the 30S ribosomal subunit. Contacts protein S5. The interaction surface between S4 and S5 is involved in control of translational fidelity.

In terms of biological role, one of the primary rRNA binding proteins, it binds directly to 16S rRNA where it nucleates assembly of the body of the 30S subunit. With S5 and S12 plays an important role in translational accuracy. This is Small ribosomal subunit protein uS4 from Orientia tsutsugamushi (strain Boryong) (Rickettsia tsutsugamushi).